The primary structure comprises 270 residues: Transmembrane protein 176B (270 aa).

4 consecutive transmembrane segments (helical) span residues 65–85, 95–115, 127–147, and 209–229; these read LALG…GVCL, ASGC…GAIV, VSSL…VLCV, and LFLA…GVGL. Residues S236, S245, S254, and S258 each carry the phosphoserine modification. Positions 237 to 270 are disordered; the sequence is SQPLNEEGSEKRLLGENSVPPSPSREQTSTAIVL. Polar residues predominate over residues 260–270; the sequence is SREQTSTAIVL.

The protein belongs to the TMEM176 family.

The protein resides in the nucleus membrane. Functionally, may play a role in the process of maturation of dendritic cells. Required for the development of cerebellar granule cells. This Pongo abelii (Sumatran orangutan) protein is Transmembrane protein 176B (TMEM176B).